The sequence spans 338 residues: UDP-N-acetylenolpyruvoylglucosamine reductase (338 aa).

An FAD-binding PCMH-type domain is found at 17–188 (IAARTDWWID…MYVDYRLRLK (172 aa)). R164 is an active-site residue. Residue S237 is the Proton donor of the active site. The active site involves E333.

It belongs to the MurB family. It depends on FAD as a cofactor.

Its subcellular location is the cytoplasm. The catalysed reaction is UDP-N-acetyl-alpha-D-muramate + NADP(+) = UDP-N-acetyl-3-O-(1-carboxyvinyl)-alpha-D-glucosamine + NADPH + H(+). Its pathway is cell wall biogenesis; peptidoglycan biosynthesis. Its function is as follows. Cell wall formation. The sequence is that of UDP-N-acetylenolpyruvoylglucosamine reductase from Porphyromonas gingivalis (strain ATCC BAA-308 / W83).